The chain runs to 168 residues: Cell division inhibitor SulA (168 aa).

The interval 106–112 (ALLTGNY) is ftsZ binding. The tract at residues 161 to 168 (KIHSSLYH) is lon protease binding.

It belongs to the SulA family. In terms of assembly, interacts with FtsZ. Is rapidly cleaved and degraded by the Lon protease once DNA damage is repaired.

Component of the SOS system and an inhibitor of cell division. Accumulation of SulA causes rapid cessation of cell division and the appearance of long, non-septate filaments. In the presence of GTP, binds a polymerization-competent form of FtsZ in a 1:1 ratio, thus inhibiting FtsZ polymerization and therefore preventing it from participating in the assembly of the Z ring. This mechanism prevents the premature segregation of damaged DNA to daughter cells during cell division. This Yersinia enterocolitica serotype O:8 / biotype 1B (strain NCTC 13174 / 8081) protein is Cell division inhibitor SulA.